The primary structure comprises 254 residues: NADPH-dependent ferric-chelate reductase (254 aa).

Residues L15–P136 enclose the FAD-binding FR-type domain.

Belongs to the SIP oxidoreductase family.

The protein localises to the cytoplasm. It catalyses the reaction 2 a Fe(II)-siderophore + NADP(+) + H(+) = 2 a Fe(III)-siderophore + NADPH. Its function is as follows. Plays a role in iron homeostasis under excess nickel conditions. The protein is NADPH-dependent ferric-chelate reductase (yqjH) of Escherichia coli (strain K12).